Reading from the N-terminus, the 110-residue chain is Flagellar hook-basal body complex protein FliE (110 aa).

The protein belongs to the FliE family.

It is found in the bacterial flagellum basal body. In Pseudomonas putida (strain W619), this protein is Flagellar hook-basal body complex protein FliE.